Consider the following 132-residue polypeptide: MTMTDPIADMLTRLRNANSAYHDTVGMPHSKIKSHIAEILQQEGFITGWKVEDAEVGKNLVLELKFGPNRERSIAGIKRISKPGLRVYAKSTNLPKVLGGLGVAIISTSHGLLTDKQAGKKGVGGEVLAYVW.

This sequence belongs to the universal ribosomal protein uS8 family. Part of the 30S ribosomal subunit. Contacts proteins S5 and S12.

Functionally, one of the primary rRNA binding proteins, it binds directly to 16S rRNA central domain where it helps coordinate assembly of the platform of the 30S subunit. This is Small ribosomal subunit protein uS8 from Streptomyces avermitilis (strain ATCC 31267 / DSM 46492 / JCM 5070 / NBRC 14893 / NCIMB 12804 / NRRL 8165 / MA-4680).